The following is a 608-amino-acid chain: ABC transporter ATP-binding protein RamB (608 aa).

The next 5 membrane-spanning stretches (helical) occupy residues 25 to 45, 66 to 86, 141 to 161, 166 to 186, and 253 to 273; these read GVLVRLALWSLAESGQAFLVG, LWLGVALVAVLSGARVVRGVF, GLVLTLRSFVFTAAGALLGLL, ALLVVVLPPLAAGLALFLVTL, and AALGVAGHLPVLALLVAVEWL. The 267-residue stretch at 30–296 folds into the ABC transmembrane type-1 domain; sequence LALWSLAESG…FTYLVQSLLP (267 aa). Residues 321–362 form a disordered region; sequence GPEPEPEPEPEPEPEPELGSGLEPEPEPASEPESGPSTASAS. A compositionally biased stretch (acidic residues) spans 324-336; the sequence is PEPEPEPEPEPEP. Positions 351-362 are enriched in low complexity; that stretch reads EPESGPSTASAS. In terms of domain architecture, ABC transporter spans 376–605; that stretch reads VELRSVTLSY…SPLYRDLTGH (230 aa). 410–417 is a binding site for ATP; that stretch reads GPSGIGKS.

The protein belongs to the ABC transporter superfamily.

The protein resides in the cell membrane. Probably involved in exporting SapB from the cell. Expression of the ram locus (ramA, ramB and ramR) induces rapid aerial mycelium formation in S.lividans. This Streptomyces coelicolor (strain ATCC BAA-471 / A3(2) / M145) protein is ABC transporter ATP-binding protein RamB.